A 743-amino-acid polypeptide reads, in one-letter code: Acetyl-coenzyme A synthetase, chloroplastic/glyoxysomal (743 aa).

Residues 1-84 constitute a chloroplast transit peptide; sequence MKIGSPSSPI…LNAVVLGESL (84 aa). The active site involves D613.

The protein belongs to the ATP-dependent AMP-binding enzyme family. Expressed in leaves, flower buds and young flowers.

It localises to the plastid. Its subcellular location is the chloroplast. The protein localises to the glyoxysome. It catalyses the reaction acetate + ATP + CoA = acetyl-CoA + AMP + diphosphate. Functionally, catalyzes the production of acetyl-CoA, an activated form of acetate that can be used for lipid synthesis or for energy generation. May play a limited role in the biosynthesis of lipids. The chain is Acetyl-coenzyme A synthetase, chloroplastic/glyoxysomal (ACS) from Arabidopsis thaliana (Mouse-ear cress).